The sequence spans 631 residues: Golgin subfamily A member 8A (631 aa).

Residues 1-20 (MLPVDGEERKSEGSDTEGDR) show a composition bias toward basic and acidic residues. Disordered stretches follow at residues 1-103 (MLPV…QEQA), 127-154 (KKQVEHQLEEEKKANNEKQKAERELEGQ), 426-447 (TSAEKEPEAAVPASGTGGESSG), and 488-520 (PGDSAKDASPGGGHHQAGPGQGGEEGEAAGAAG). Low complexity predominate over residues 78–92 (SLYLSPKSSSASSSL). A compositionally biased stretch (polar residues) spans 93–103 (HARQSPCQEQA). Residues 110 to 468 (SIKISRLNDT…REHVEKLELG (359 aa)) adopt a coiled-coil conformation. Residues 128-152 (KQVEHQLEEEKKANNEKQKAERELE) show a composition bias toward basic and acidic residues. Over residues 497 to 510 (PGGGHHQAGPGQGG) the composition is skewed to gly residues. The segment at 519–631 (AGDGVAACGS…CWAWLPRRRR (113 aa)) is golgi-targeting domain.

This sequence belongs to the GOLGA8 family.

It localises to the golgi apparatus. Its subcellular location is the golgi stack membrane. May be involved in maintaining Golgi structure. The sequence is that of Golgin subfamily A member 8A (GOLGA8A) from Homo sapiens (Human).